A 337-amino-acid polypeptide reads, in one-letter code: MRNITTSAYTPTEFTIENISDTVAKISAWPFEIGYGITLAHPLRRLLYTSTIGYAPTAIHIDGVAHEFDSMRGMLEDVALFIINLKKLRFKIKGESNKEIVEFSFKGSKEIYGKDLNNDQVEVVNKDAYLATINEDAELKFTLIVEKGIGYVPSEEIKELINDPKFIALDAFFTPVREATYDIEKVLFEDNPDYEKVVLTVTTDGQITPNEAFQNALEAMYKQLSVFDKITNVRSVIKNQATSNELENTKLLQNITDLNLSARSYNCLEKAGVVYIGELALMSVSELAGLKNLGKKSLDEIKNIMESIGFPVGTSKLSDNKEILKNKIAELKAQNEG.

An alpha N-terminal domain (alpha-NTD) region spans residues Met1–Thr231. The interval Asn248–Gly337 is alpha C-terminal domain (alpha-CTD).

This sequence belongs to the RNA polymerase alpha chain family. Homodimer. The RNAP catalytic core consists of 2 alpha, 1 beta, 1 beta' and 1 omega subunit. When a sigma factor is associated with the core the holoenzyme is formed, which can initiate transcription.

It carries out the reaction RNA(n) + a ribonucleoside 5'-triphosphate = RNA(n+1) + diphosphate. Functionally, DNA-dependent RNA polymerase catalyzes the transcription of DNA into RNA using the four ribonucleoside triphosphates as substrates. This is DNA-directed RNA polymerase subunit alpha from Campylobacter jejuni subsp. jejuni serotype O:6 (strain 81116 / NCTC 11828).